We begin with the raw amino-acid sequence, 449 residues long: Chromosomal replication initiator protein DnaA (449 aa).

The tract at residues 1 to 71 is domain I, interacts with DnaA modulators; that stretch reads MPSSLWKHCL…LLSHYSSGRI (71 aa). Positions 71 to 112 are domain II; that stretch reads IEKALLEVGSCSLQPQPHIQAVELTSKSARSSSRVVDRIPES. Positions 113 to 329 are domain III, AAA+ region; that stretch reads RLNKNYTFDS…GALRRVIAYS (217 aa). ATP-binding residues include Gly157, Gly159, Lys160, and Thr161. A domain IV, binds dsDNA region spans residues 330-449; it reads RFTHRPITME…YHNLLKKLST (120 aa).

This sequence belongs to the DnaA family. As to quaternary structure, oligomerizes as a right-handed, spiral filament on DNA at oriC.

The protein localises to the cytoplasm. Plays an essential role in the initiation and regulation of chromosomal replication. ATP-DnaA binds to the origin of replication (oriC) to initiate formation of the DNA replication initiation complex once per cell cycle. Binds the DnaA box (a 9 base pair repeat at the origin) and separates the double-stranded (ds)DNA. Forms a right-handed helical filament on oriC DNA; dsDNA binds to the exterior of the filament while single-stranded (ss)DNA is stabiized in the filament's interior. The ATP-DnaA-oriC complex binds and stabilizes one strand of the AT-rich DNA unwinding element (DUE), permitting loading of DNA polymerase. After initiation quickly degrades to an ADP-DnaA complex that is not apt for DNA replication. Binds acidic phospholipids. The chain is Chromosomal replication initiator protein DnaA from Nitrosococcus oceani (strain ATCC 19707 / BCRC 17464 / JCM 30415 / NCIMB 11848 / C-107).